We begin with the raw amino-acid sequence, 566 residues long: Putative ABC transporter ATP-binding protein BCE_2668 (566 aa).

2 ABC transporter domains span residues Ile5 to Glu246 and Leu300 to Lys533. Residues Gly39–Ser46 and Gly333–Ser340 each bind ATP.

This sequence belongs to the ABC transporter superfamily.

It localises to the cell membrane. Functionally, probably part of an ABC transporter complex. Responsible for energy coupling to the transport system. This is Putative ABC transporter ATP-binding protein BCE_2668 from Bacillus cereus (strain ATCC 10987 / NRS 248).